A 326-amino-acid polypeptide reads, in one-letter code: ATP synthase gamma chain (326 aa).

Belongs to the ATPase gamma chain family. In terms of assembly, F-type ATPases have 2 components, CF(1) - the catalytic core - and CF(0) - the membrane proton channel. CF(1) has five subunits: alpha(3), beta(3), gamma(1), delta(1), epsilon(1). CF(0) has three main subunits: a, b and c.

Its subcellular location is the cell membrane. Produces ATP from ADP in the presence of a proton gradient across the membrane. The gamma chain is believed to be important in regulating ATPase activity and the flow of protons through the CF(0) complex. The sequence is that of ATP synthase gamma chain from Corynebacterium jeikeium (strain K411).